We begin with the raw amino-acid sequence, 139 residues long: Holo-[acyl-carrier-protein] synthase (139 aa).

Mg(2+)-binding residues include aspartate 9 and glutamate 63.

This sequence belongs to the P-Pant transferase superfamily. AcpS family. Mg(2+) serves as cofactor.

Its subcellular location is the cytoplasm. The catalysed reaction is apo-[ACP] + CoA = holo-[ACP] + adenosine 3',5'-bisphosphate + H(+). In terms of biological role, transfers the 4'-phosphopantetheine moiety from coenzyme A to a Ser of acyl-carrier-protein. The polypeptide is Holo-[acyl-carrier-protein] synthase (Wigglesworthia glossinidia brevipalpis).